We begin with the raw amino-acid sequence, 96 residues long: Small ribosomal subunit protein bS6 (96 aa).

The protein belongs to the bacterial ribosomal protein bS6 family.

In terms of biological role, binds together with bS18 to 16S ribosomal RNA. The polypeptide is Small ribosomal subunit protein bS6 (Heliobacterium modesticaldum (strain ATCC 51547 / Ice1)).